The chain runs to 390 residues: MPPSGLRLLPLLLPLLWLLMLTPGRPVAGLSTCKTIDMELVKRKRIEAIRGQILSKLRLASPPSQGDVPPGPLPEAILALYNSTRDRVAGESAETEPEPEADYYAKEVTRVLMVEYGNKIYDKMKSSSHSIYMFFNTSELREAVPEPVLLSRADVRLLRLKLKVEQHVELYQKYSNNSWRYLSNRLLAPSDSPEWLSFDVTGVVRQWLTRREEIEGFRLSAHCSCDSKDNTLQVDINGFSSGRRGDLATIHGMNRPFLLLMATPLERAQHLHSSRHRRALDTNYCFSSTEKNCCVRQLYIDFRKDLGWKWIHEPKGYHANFCLGPCPYIWSLDTQYSKVLALYNQHNPGASAAPCCVPQALEPLPIVYYVGRKPKVEQLSNMIVRSCKCS.

Positions 1–29 (MPPSGLRLLPLLLPLLWLLMLTPGRPVAG) are cleaved as a signal peptide. A straightjacket domain region spans residues 30–74 (LSTCKTIDMELVKRKRIEAIRGQILSKLRLASPPSQGDVPPGPLP). The arm domain stretch occupies residues 75 to 271 (EAILALYNST…ATPLERAQHL (197 aa)). N-linked (GlcNAc...) asparagine glycosylation is found at Asn82, Asn136, and Asn176. Residues 226–252 (DSKDNTLQVDINGFSSGRRGDLATIHG) are bowtie tail. The short motif at 244-246 (RGD) is the Cell attachment site element. 4 disulfides stabilise this stretch: Cys285–Cys294, Cys293–Cys356, Cys322–Cys387, and Cys326–Cys389.

Belongs to the TGF-beta family. As to quaternary structure, homodimer; disulfide-linked. Interacts with the serine proteases, HTRA1 and HTRA3: the interaction with either inhibits TGFB1-mediated signaling and the HTRA protease activity is required for this inhibition. May interact with THSD4; this interaction may lead to sequestration by FBN1 microfibril assembly and attenuation of TGFB signaling. Interacts with CD109, DPT and ASPN. Interacts with EFEMP2. Interacts with TSKU; the interaction contributes to regulation of the hair cycle. Interacts with TGFBR3. Homodimer; disulfide-linked. Interacts with transforming growth factor beta-1 (TGF-beta-1) chain; interaction is non-covalent and maintains TGF-beta-1 in a latent state; each latency-associated peptide (LAP) monomer interacts with TGF-beta-1 in the other monomer. Interacts with LTBP1; leading to regulation of TGF-beta-1 activation. Interacts with LRRC32/GARP; leading to regulation of TGF-beta-1 activation on the surface of activated regulatory T-cells (Tregs). Interacts with LRRC33/NRROS; leading to regulation of TGF-beta-1 activation in macrophages and microglia. Interacts (via cell attachment site) with integrins ITGAV and ITGB6 (ITGAV:ITGB6), leading to release of the active TGF-beta-1. Interacts with NREP; the interaction results in a decrease in TGFB1 autoinduction. Interacts with HSP90AB1; inhibits latent TGFB1 activation. In terms of assembly, homodimer; disulfide-linked. Interacts with TGF-beta receptors (TGFBR1 and TGFBR2), leading to signal transduction. Interacts with EFEMP2. In terms of processing, transforming growth factor beta-1 proprotein: The precursor proprotein is cleaved in the Golgi apparatus by FURIN to form Transforming growth factor beta-1 (TGF-beta-1) and Latency-associated peptide (LAP) chains, which remain non-covalently linked, rendering TGF-beta-1 inactive. N-glycosylated. Deglycosylation leads to activation of Transforming growth factor beta-1 (TGF-beta-1); mechanisms triggering deglycosylation-driven activation of TGF-beta-1 are however unclear.

Its subcellular location is the secreted. The protein localises to the extracellular space. It is found in the extracellular matrix. Its function is as follows. Transforming growth factor beta-1 proprotein: Precursor of the Latency-associated peptide (LAP) and Transforming growth factor beta-1 (TGF-beta-1) chains, which constitute the regulatory and active subunit of TGF-beta-1, respectively. Required to maintain the Transforming growth factor beta-1 (TGF-beta-1) chain in a latent state during storage in extracellular matrix. Associates non-covalently with TGF-beta-1 and regulates its activation via interaction with 'milieu molecules', such as LTBP1, LRRC32/GARP and LRRC33/NRROS, that control activation of TGF-beta-1. Interaction with LRRC33/NRROS regulates activation of TGF-beta-1 in macrophages and microglia. Interaction with LRRC32/GARP controls activation of TGF-beta-1 on the surface of activated regulatory T-cells (Tregs). Interaction with integrins (ITGAV:ITGB6 or ITGAV:ITGB8) results in distortion of the Latency-associated peptide chain and subsequent release of the active TGF-beta-1. In terms of biological role, multifunctional protein that regulates the growth and differentiation of various cell types and is involved in various processes, such as normal development, immune function, microglia function and responses to neurodegeneration. Activation into mature form follows different steps: following cleavage of the proprotein in the Golgi apparatus, Latency-associated peptide (LAP) and Transforming growth factor beta-1 (TGF-beta-1) chains remain non-covalently linked rendering TGF-beta-1 inactive during storage in extracellular matrix. At the same time, LAP chain interacts with 'milieu molecules', such as LTBP1, LRRC32/GARP and LRRC33/NRROS that control activation of TGF-beta-1 and maintain it in a latent state during storage in extracellular milieus. TGF-beta-1 is released from LAP by integrins (ITGAV:ITGB6 or ITGAV:ITGB8): integrin-binding to LAP stabilizes an alternative conformation of the LAP bowtie tail and results in distortion of the LAP chain and subsequent release of the active TGF-beta-1. Once activated following release of LAP, TGF-beta-1 acts by binding to TGF-beta receptors (TGFBR1 and TGFBR2), which transduce signal. While expressed by many cells types, TGF-beta-1 only has a very localized range of action within cell environment thanks to fine regulation of its activation by Latency-associated peptide chain (LAP) and 'milieu molecules'. Plays an important role in bone remodeling: acts as a potent stimulator of osteoblastic bone formation, causing chemotaxis, proliferation and differentiation in committed osteoblasts. Can promote either T-helper 17 cells (Th17) or regulatory T-cells (Treg) lineage differentiation in a concentration-dependent manner. At high concentrations, leads to FOXP3-mediated suppression of RORC and down-regulation of IL-17 expression, favoring Treg cell development. At low concentrations in concert with IL-6 and IL-21, leads to expression of the IL-17 and IL-23 receptors, favoring differentiation to Th17 cells. Stimulates sustained production of collagen through the activation of CREB3L1 by regulated intramembrane proteolysis (RIP). Mediates SMAD2/3 activation by inducing its phosphorylation and subsequent translocation to the nucleus. Positively regulates odontoblastic differentiation in dental papilla cells, via promotion of IPO7-mediated translocation of phosphorylated SMAD2 to the nucleus and subsequent transcription of target genes. Can induce epithelial-to-mesenchymal transition (EMT) and cell migration in various cell types. This Bos taurus (Bovine) protein is Transforming growth factor beta-1 proprotein (TGFB1).